Here is a 150-residue protein sequence, read N- to C-terminus: Large ribosomal subunit protein bL9 (150 aa).

This sequence belongs to the bacterial ribosomal protein bL9 family.

Functionally, binds to the 23S rRNA. This is Large ribosomal subunit protein bL9 from Lactococcus lactis subsp. cremoris (strain MG1363).